The following is a 78-amino-acid chain: DNA import protein CedA1 (78 aa).

A run of 2 helical transmembrane segments spans residues 12–32 (STVT…GWAL) and 53–73 (AIIA…ISYI).

As to quaternary structure, forms a complex composed of CedA, CedA1 and CedA2.

The protein localises to the cell membrane. In terms of biological role, part of the Ced system, which is involved in DNA import. The polypeptide is DNA import protein CedA1 (Sulfolobus acidocaldarius (strain ATCC 33909 / DSM 639 / JCM 8929 / NBRC 15157 / NCIMB 11770)).